The primary structure comprises 397 residues: Mannosylglycerate synthase (397 aa).

GDP-alpha-D-mannose is bound by residues 7-11 (PFKHE), Ile35, Gln66, Lys76, Asp100, and 100-101 (DA). Asp102 provides a ligand contact to a divalent metal cation. Residues Arg131 and 136–139 (AMIT) contribute to the (R)-glycerate site. The GDP-alpha-D-mannose site is built by Leu163 and Asp192. His217 provides a ligand contact to a divalent metal cation. Arg218 and Tyr220 together coordinate GDP-alpha-D-mannose.

Belongs to the glycosyltransferase 78 family. Homotetramer. Dimer of dimers. The cofactor is Mg(2+). Ca(2+) is required as a cofactor. It depends on Mn(2+) as a cofactor. Requires Ni(2+) as cofactor. Co(2+) serves as cofactor.

The catalysed reaction is (R)-glycerate + GDP-alpha-D-mannose = (2R)-2-O-(alpha-D-mannosyl)-glycerate + GDP + H(+). Its activity is regulated as follows. Inhibited by GDP. Functionally, involved in the biosynthesis of the stress protectant 2-O-alpha-D-mannosyl glycerate (MG) which is produced in response to growth at supraoptimal temperature and salinity, and protects several enzymes against inactivation by temperature, freeze-drying and osmotic stress. Catalyzes the condensation of alpha-GDP-D-mannose (GDP-Man) with D-glycerate to produce alpha-mannosyl-D-glycerate. It is specific for GDP-Man, but it can also use alpha-GDP-D-glucose (GDP-Glc), beta-GDP-D-fructose, alpha-UDP-D-mannose and alpha-UDP-D-glucose as sugar donors. It is specific for D-glycerate, but it can also use D-lactate and glycolate as sugar acceptors. This reaction occurs with a net retention of anomeric configuration; the newly formed glycosidic linkage has the same alpha configuration as the sugar donor. This chain is Mannosylglycerate synthase (mgs), found in Rhodothermus marinus (Rhodothermus obamensis).